A 244-amino-acid chain; its full sequence is Type III pantothenate kinase (244 aa).

8–15 (DQGNSACK) serves as a coordination point for ATP. Residue 94 to 97 (GADR) participates in substrate binding. Asp-96 serves as the catalytic Proton acceptor. Asp-117 is a binding site for K(+). An ATP-binding site is contributed by Thr-120. Thr-175 lines the substrate pocket.

This sequence belongs to the type III pantothenate kinase family. As to quaternary structure, homodimer. The cofactor is NH4(+). K(+) is required as a cofactor.

Its subcellular location is the cytoplasm. The enzyme catalyses (R)-pantothenate + ATP = (R)-4'-phosphopantothenate + ADP + H(+). It functions in the pathway cofactor biosynthesis; coenzyme A biosynthesis; CoA from (R)-pantothenate: step 1/5. In terms of biological role, catalyzes the phosphorylation of pantothenate (Pan), the first step in CoA biosynthesis. The protein is Type III pantothenate kinase of Porphyromonas gingivalis (strain ATCC 33277 / DSM 20709 / CIP 103683 / JCM 12257 / NCTC 11834 / 2561).